Reading from the N-terminus, the 259-residue chain is Small ribosomal subunit protein uS2 (259 aa).

It belongs to the universal ribosomal protein uS2 family.

The sequence is that of Small ribosomal subunit protein uS2 from Streptococcus pneumoniae serotype 2 (strain D39 / NCTC 7466).